The following is a 238-amino-acid chain: Chorionic somatomammotropin hormone 2 (238 aa).

The signal sequence occupies residues 1 to 36; sequence MAPAPSFRGHQWTYNPVRGSCLLLLLVVSNLLLCQG. His-66 contacts Zn(2+). Residues Asn-70, Asn-92, Asn-146, and Asn-160 are each glycosylated (N-linked (GlcNAc...) asparagine). Cys-97 and Cys-215 form a disulfide bridge. Asp-224 provides a ligand contact to Zn(2+). The cysteines at positions 232 and 238 are disulfide-linked.

This sequence belongs to the somatotropin/prolactin family.

The protein localises to the secreted. The sequence is that of Chorionic somatomammotropin hormone 2 (CSH2) from Bos taurus (Bovine).